Here is a 278-residue protein sequence, read N- to C-terminus: Elongation factor Ts 2, mitochondrial (278 aa).

This sequence belongs to the EF-Ts family.

Its subcellular location is the mitochondrion. Associates with the EF-Tu.GDP complex and induces the exchange of GDP to GTP. It remains bound to the aminoacyl-tRNA.EF-Tu.GTP complex up to the GTP hydrolysis stage on the ribosome. The protein is Elongation factor Ts 2, mitochondrial of Trypanosoma cruzi (strain CL Brener).